A 466-amino-acid polypeptide reads, in one-letter code: Asparagine--tRNA ligase (466 aa).

It belongs to the class-II aminoacyl-tRNA synthetase family. As to quaternary structure, homodimer.

It is found in the cytoplasm. It catalyses the reaction tRNA(Asn) + L-asparagine + ATP = L-asparaginyl-tRNA(Asn) + AMP + diphosphate + H(+). The chain is Asparagine--tRNA ligase from Buchnera aphidicola subsp. Acyrthosiphon pisum (strain APS) (Acyrthosiphon pisum symbiotic bacterium).